Here is a 332-residue protein sequence, read N- to C-terminus: Glycerol-3-phosphate dehydrogenase [NAD(P)+] (332 aa).

3 residues coordinate NADPH: W11, R30, and K108. Positions 108, 137, and 139 each coordinate sn-glycerol 3-phosphate. A141 is an NADPH binding site. The sn-glycerol 3-phosphate site is built by K192, D245, S255, R256, and N257. Catalysis depends on K192, which acts as the Proton acceptor. R256 provides a ligand contact to NADPH. Residues V280 and E282 each contribute to the NADPH site.

The protein belongs to the NAD-dependent glycerol-3-phosphate dehydrogenase family.

It localises to the cytoplasm. The enzyme catalyses sn-glycerol 3-phosphate + NAD(+) = dihydroxyacetone phosphate + NADH + H(+). It carries out the reaction sn-glycerol 3-phosphate + NADP(+) = dihydroxyacetone phosphate + NADPH + H(+). It participates in membrane lipid metabolism; glycerophospholipid metabolism. Catalyzes the reduction of the glycolytic intermediate dihydroxyacetone phosphate (DHAP) to sn-glycerol 3-phosphate (G3P), the key precursor for phospholipid synthesis. This chain is Glycerol-3-phosphate dehydrogenase [NAD(P)+], found in Paraburkholderia phymatum (strain DSM 17167 / CIP 108236 / LMG 21445 / STM815) (Burkholderia phymatum).